A 37-amino-acid polypeptide reads, in one-letter code: Large ribosomal subunit protein bL36 (37 aa).

The protein belongs to the bacterial ribosomal protein bL36 family.

In Dictyoglomus thermophilum (strain ATCC 35947 / DSM 3960 / H-6-12), this protein is Large ribosomal subunit protein bL36.